An 868-amino-acid chain; its full sequence is uncharacterized protein (868 aa).

It is found in the cytoplasm. Its subcellular location is the nucleus. This is an uncharacterized protein from Schizosaccharomyces pombe (strain 972 / ATCC 24843) (Fission yeast).